The chain runs to 353 residues: JmjC domain-containing protein E (353 aa).

A JmjC domain is found at 138 to 348 (YYIQYQNNSL…ETTKYQKQIK (211 aa)).

The protein is JmjC domain-containing protein E (jcdE) of Dictyostelium discoideum (Social amoeba).